The following is a 705-amino-acid chain: Structure-specific endonuclease subunit SLX1 homolog (705 aa).

Positions 4–90 constitute a GIY-YIG domain; the sequence is RFHCVYLLTS…TASARLRHAI (87 aa). Disordered regions lie at residues 155 to 192 and 290 to 323; these read RASSPRVGTQQHSQRSSSLQGQADGVATPPLPALDSKG and ASFASDSDDEDTRRFAPYCPSTGSRTPSPQRVHT. Composition is skewed to polar residues over residues 160–175 and 310–320; these read RVGTQQHSQRSSSLQG and STGSRTPSPQR. The segment at 446-526 adopts an SLX1-type zinc-finger fold; the sequence is CSLCTLPLQP…PSQPCPCPLC (81 aa). Low complexity predominate over residues 595–604; sequence KGAGEAPGAA. Residues 595–628 form a disordered region; the sequence is KGAGEAPGAASTVRASTMHVGPARRDAPRVSSPS.

It belongs to the SLX1 family. As to quaternary structure, forms a heterodimer with a member of the SLX4 family. It depends on a divalent metal cation as a cofactor.

It is found in the nucleus. Catalytic subunit of a heterodimeric structure-specific endonuclease that resolves DNA secondary structures generated during DNA repair and recombination. Has endonuclease activity towards branched DNA substrates, introducing single-strand cuts in duplex DNA close to junctions with ss-DNA. The protein is Structure-specific endonuclease subunit SLX1 homolog of Leishmania infantum.